Consider the following 158-residue polypeptide: Fibroblast growth factor 2 (158 aa).

A propeptide spanning residues 1–12 (MAAGAAGSITTL) is cleaved from the precursor. Asn-39 serves as a coordination point for heparin. The heparin-binding stretch occupies residues 131–147 (KRTGQYKPGPKTGPGQK).

This sequence belongs to the heparin-binding growth factors family.

The protein localises to the secreted. It localises to the nucleus. Its function is as follows. Acts as a ligand for FGFR1, FGFR2, FGFR3 and FGFR4. Also acts as an integrin ligand which is required for FGF2 signaling. Plays an important role in the regulation of cell survival, cell division, cell differentiation and cell migration. Functions as a potent mitogen in vitro. Can induce angiogenesis. The sequence is that of Fibroblast growth factor 2 (FGF2) from Gallus gallus (Chicken).